A 118-amino-acid chain; its full sequence is Small ribosomal subunit protein uS13 (118 aa).

The segment at 94 to 118 is disordered; sequence GLPVRGQRTKTNARTRKGPRKPIKK.

The protein belongs to the universal ribosomal protein uS13 family. Part of the 30S ribosomal subunit. Forms a loose heterodimer with protein S19. Forms two bridges to the 50S subunit in the 70S ribosome.

Located at the top of the head of the 30S subunit, it contacts several helices of the 16S rRNA. In the 70S ribosome it contacts the 23S rRNA (bridge B1a) and protein L5 of the 50S subunit (bridge B1b), connecting the 2 subunits; these bridges are implicated in subunit movement. Contacts the tRNAs in the A and P-sites. The protein is Small ribosomal subunit protein uS13 of Haemophilus ducreyi (strain 35000HP / ATCC 700724).